The sequence spans 615 residues: DNA mismatch repair protein MutL (615 aa).

The interval 363 to 397 (FAEPAAREPVAPRYTPAPASGSRPAAPWPNAQPGY) is disordered. A compositionally biased stretch (low complexity) spans 364–391 (AEPAAREPVAPRYTPAPASGSRPAAPWP).

Belongs to the DNA mismatch repair MutL/HexB family.

Its function is as follows. This protein is involved in the repair of mismatches in DNA. It is required for dam-dependent methyl-directed DNA mismatch repair. May act as a 'molecular matchmaker', a protein that promotes the formation of a stable complex between two or more DNA-binding proteins in an ATP-dependent manner without itself being part of a final effector complex. The sequence is that of DNA mismatch repair protein MutL from Escherichia coli (strain K12 / MC4100 / BW2952).